The primary structure comprises 274 residues: F-actin-capping protein subunit alpha (274 aa).

The protein belongs to the F-actin-capping protein alpha subunit family. As to quaternary structure, heterodimer of an alpha and a beta subunit.

It is found in the cytoplasm. Functionally, F-actin-capping proteins bind in a Ca(2+)-independent manner to the fast growing ends of actin filaments (barbed end) thereby blocking the exchange of subunits at these ends. Unlike other capping proteins (such as gelsolin and severin), these proteins do not sever actin filaments. The protein is F-actin-capping protein subunit alpha of Chaetomium thermophilum (strain DSM 1495 / CBS 144.50 / IMI 039719) (Thermochaetoides thermophila).